The chain runs to 650 residues: MGNVQTSTNVYNIDGNGNTFAPSSQMASTASPAIDLKPGVLNPTGKLWQTMGTGAPSADSLVLVVDNKGEYTYLSENMRETLNKAVTDVNMWQPLFQATKSGCGPVVLANFTTISTGYVGATADDAFSNGLVSNGPFLATMHIMELQKTIAARMRDVAIWQKHLDTAMTLMTPDVSAGDVTCKWRSLLEFAQDILPLDNLCRSYPNEFYTVAAQRYPAIRPGQPDTQVALPQPHPLGEVAGSFNAPTSEVGSLVGAGAALSDAISTLASKDLDLVEADTPLPVSVFTPSLAPRTYRPAFIDPQDAAWIAQWNGDANIRIITTYQSTDYTVQLGPGPTRVIDMNAMIDAKLTLDVSGTILPFQENNDLSSAIPAFVLIQTKVPLHSVTQASDVEGITVVSAAESSAINLSVNVRGDPRFDMLHLHAMFERETIAGIPYIYGIGTFLIPSITSSSSFCNPTLMDGELTVTPLLLRETTYKGAVVDTVTPSEVMANQTSEEVASALANDAVLLVSGQLERLATVVGDVIPIASGEDDAATSAIVGRLAIEATMRARHGGDTRALPNFGQLWKRAKRAASMFASNPALALQVGVPVLADSGILSALTSGVSTAIRTGSLGKGVSDASSKLNARQSLTLARKTFFKKVEELWPSQ.

Gly2 is lipidated: N-myristoyl glycine; by host. Residues Asn110, Asn407, and Asn493 are each glycosylated (N-linked (GlcNAc...) asparagine; by host).

This sequence belongs to the aquareoviridae outer capsid VP4 protein family. Interacts with VP6 and VP7. In terms of processing, cleaved during the endosomal proteolytic disassembly of the outer capsid. Post-translationally, N-terminally myristoylated. This acylation is essential for the membrane fusion activity.

The protein resides in the virion. In terms of biological role, interacts with VP7 to form the outer icosahedral capsid with an incomplete T=13 symmetry, about 80 nm in diameter, and consisting of 200 VP4-VP7 trimers. Myristoylated N-terminal peptide may be released in the endosome and involved in permeabilization and delivery of transcriptionally active viral particles into the host cell cytoplasm (Potential). This is Outer capsid protein VP4 (S6) from Ctenopharyngodon idella (Grass carp).